The chain runs to 179 residues: Large ribosomal subunit protein uL5 (179 aa).

This sequence belongs to the universal ribosomal protein uL5 family. As to quaternary structure, part of the 50S ribosomal subunit; part of the 5S rRNA/L5/L18/L25 subcomplex. Contacts the 5S rRNA and the P site tRNA. Forms a bridge to the 30S subunit in the 70S ribosome.

This is one of the proteins that bind and probably mediate the attachment of the 5S RNA into the large ribosomal subunit, where it forms part of the central protuberance. In the 70S ribosome it contacts protein S13 of the 30S subunit (bridge B1b), connecting the 2 subunits; this bridge is implicated in subunit movement. Contacts the P site tRNA; the 5S rRNA and some of its associated proteins might help stabilize positioning of ribosome-bound tRNAs. In Pseudomonas entomophila (strain L48), this protein is Large ribosomal subunit protein uL5.